Reading from the N-terminus, the 117-residue chain is MAIKKTYRVKRSKDFDQIFSAKHSFANKKFVVYKLNTNQPHFRVGLSVSKKLGHAVLRNRIKRLLRHAIAEFKPYLTDEDFVIIARSGVETLSFEEVKKNLKHVLKLSKIYVDGEND.

The protein belongs to the RnpA family. In terms of assembly, consists of a catalytic RNA component (M1 or rnpB) and a protein subunit.

It catalyses the reaction Endonucleolytic cleavage of RNA, removing 5'-extranucleotides from tRNA precursor.. Functionally, RNaseP catalyzes the removal of the 5'-leader sequence from pre-tRNA to produce the mature 5'-terminus. It can also cleave other RNA substrates such as 4.5S RNA. The protein component plays an auxiliary but essential role in vivo by binding to the 5'-leader sequence and broadening the substrate specificity of the ribozyme. The protein is Ribonuclease P protein component of Lactococcus lactis subsp. lactis (strain IL1403) (Streptococcus lactis).